Consider the following 69-residue polypeptide: uncharacterized protein (69 aa).

The first 18 residues, 1-18 (MAMLWISMFIIMRKYGRS), serve as a signal peptide directing secretion. The segment at 17 to 69 (RSSSSSSSSSSSSSSSSSSSSSSSSSSSSSSSSSSSSSSSSGSSSNSNRVVVV) is disordered. Residues 18–61 (SSSSSSSSSSSSSSSSSSSSSSSSSSSSSSSSSSSSSSSSGSSS) are compositionally biased toward low complexity.

Its subcellular location is the secreted. This is an uncharacterized protein from Dictyostelium discoideum (Social amoeba).